The chain runs to 332 residues: NH(3)-dependent NAD(+) synthetase (332 aa).

Residue 48–55 (GLSGGVDS) participates in ATP binding. Residue aspartate 54 coordinates Mg(2+). Arginine 184 lines the deamido-NAD(+) pocket. Threonine 204 contributes to the ATP binding site. A Mg(2+)-binding site is contributed by glutamate 209. Positions 217 and 224 each coordinate deamido-NAD(+). ATP contacts are provided by lysine 233 and threonine 255.

It belongs to the NAD synthetase family. As to quaternary structure, homodimer.

It carries out the reaction deamido-NAD(+) + NH4(+) + ATP = AMP + diphosphate + NAD(+) + H(+). Its pathway is cofactor biosynthesis; NAD(+) biosynthesis; NAD(+) from deamido-NAD(+) (ammonia route): step 1/1. Functionally, catalyzes the ATP-dependent amidation of deamido-NAD to form NAD. Uses ammonia as a nitrogen source. The protein is NH(3)-dependent NAD(+) synthetase of Rhizobium rhizogenes (strain K84 / ATCC BAA-868) (Agrobacterium radiobacter).